Here is a 181-residue protein sequence, read N- to C-terminus: ADP-ribosylation factor-like protein 1 (181 aa).

A lipid anchor (N-myristoyl glycine) is attached at Gly-2. Residues 24–31 (GLDGAGKT), 45–48 (TIPT), Gly-70, 126–129 (NKQD), and 160–161 (AT) each bind GTP. Thr-31 and Thr-48 together coordinate Mg(2+).

This sequence belongs to the small GTPase superfamily. Arf family. In terms of assembly, the GTP-bound form interacts with GOLGA1. The GTP-bound form interacts with GOLGA4 and RGPD8. The GTP-bound form directly interacts with ARFIP2. Binds to SCOC, preferentially in its GTP-bound form. May interact with UNC119. Interacts with ARFIP1; this interaction directs ARFIP1 to the trans-Golgi membranes. Interacts with ARFGEF1 (via N-terminus). As to expression, detected in heart, liver, lung and liver (at protein level). Detected in fetal heart, lung, liver and kidney. Detected in adult heart, placenta, lung, liver, skeletal muscle, kidney and pancreas.

It localises to the golgi apparatus membrane. The protein resides in the golgi apparatus. It is found in the trans-Golgi network membrane. The protein localises to the membrane. Its function is as follows. GTP-binding protein that recruits several effectors, such as golgins, arfaptins and Arf-GEFs to the trans-Golgi network, and modulates their functions at the Golgi complex. Plays thereby a role in a wide range of fundamental cellular processes, including cell polarity, innate immunity, or protein secretion mediated by arfaptins, which were shown to play a role in maintaining insulin secretion from pancreatic beta cells. The protein is ADP-ribosylation factor-like protein 1 (ARL1) of Homo sapiens (Human).